Consider the following 989-residue polypeptide: Cellulose synthase A catalytic subunit 4 [UDP-forming] (989 aa).

The Cytoplasmic portion of the chain corresponds to 1–184 (MMESGVPPCA…SRIIPISKNK (184 aa)). C9, C12, C20, C23, C28, C31, C43, and C46 together coordinate Zn(2+). An RING-type; degenerate zinc finger spans residues 9–47 (CAACGDDAHAACRACSYALCKACLDEDAAEGRTTCARCG). Residues 138-149 (KKEKKASAKKAA) show a composition bias toward basic residues. The disordered stretch occupies residues 138–158 (KKEKKASAKKAAAKAQAPPVE). The helical transmembrane segment at 185–205 (LTPYRAVIIMRLVVLGLFFHY) threads the bilayer. At 206–213 (RITNPVYS) the chain is on the extracellular side. The chain crosses the membrane as a helical span at residues 214–234 (AFGLWMTSVICEIWFGFSWIL). At 235 to 772 (DQFPKWCPIN…INTIVYPFTS (538 aa)) the chain is on the cytoplasmic side. S272, K278, E279, and D308 together coordinate UDP-alpha-D-glucose. D308 is an active-site residue. The stretch at 362–389 (VKERRAMKRDYEEYKVRINALVAKAQKT) forms a coiled coil. K449 lines the UDP-alpha-D-glucose pocket. Mn(2+) is bound by residues K450 and D474. D688 is a catalytic residue. Residues 773 to 793 (LPLIAYCCLPAICLLTGKFII) traverse the membrane as a helical segment. Topologically, residues 794 to 798 (PTLSN) are extracellular. Residues 799–819 (AATIWFLGLFISIIVTSVLEL) form a helical membrane-spanning segment. Topologically, residues 820–835 (RWSGIGIEDWWRNEQF) are cytoplasmic. A helical membrane pass occupies residues 836-856 (WVIGGVSAHLFAVFQGILKMI). Residues 857–884 (AGLDTNFTVTAKATDDTEFGELYVFKWT) lie on the Extracellular side of the membrane. The N-linked (GlcNAc...) asparagine glycan is linked to N862. The helical transmembrane segment at 885–905 (TVLIPPTSILVLNLVGVVAGF) threads the bilayer. The Cytoplasmic portion of the chain corresponds to 906–916 (SDALNSGYESW). The chain crosses the membrane as a helical span at residues 917–937 (GPLFGKVFFAMWVIMHLYPFL). Topologically, residues 938 to 946 (KGLMGRQNR) are extracellular. The chain crosses the membrane as a helical span at residues 947–967 (TPTIVVLWSVLLASVFSLLWV). Topologically, residues 968–989 (KIDPFIGSSETTTTNSCANFDC) are cytoplasmic.

It belongs to the glycosyltransferase 2 family. Plant cellulose synthase subfamily. Mn(2+) serves as cofactor. Requires Zn(2+) as cofactor.

It localises to the cell membrane. The catalysed reaction is [(1-&gt;4)-beta-D-glucosyl](n) + UDP-alpha-D-glucose = [(1-&gt;4)-beta-D-glucosyl](n+1) + UDP + H(+). It functions in the pathway glycan metabolism; plant cellulose biosynthesis. Catalytic subunit of cellulose synthase terminal complexes ('rosettes'), required for beta-1,4-glucan microfibril crystallization, a major mechanism of the cell wall formation. Involved in the secondary cell wall formation. The chain is Cellulose synthase A catalytic subunit 4 [UDP-forming] (CESA4) from Oryza sativa subsp. indica (Rice).